The chain runs to 392 residues: Queuine tRNA-ribosyltransferase (392 aa).

Asp93 serves as the catalytic Proton acceptor. Residues Asp93–Tyr97, Asp147, Gln189, and Gly216 each bind substrate. The interval Gly247–Asp253 is RNA binding. The Nucleophile role is filled by Asp266. The tract at residues Thr271–Arg275 is RNA binding; important for wobble base 34 recognition. Zn(2+) contacts are provided by Cys304, Cys306, Cys309, and His335.

Belongs to the queuine tRNA-ribosyltransferase family. As to quaternary structure, homodimer. Within each dimer, one monomer is responsible for RNA recognition and catalysis, while the other monomer binds to the replacement base PreQ1. Requires Zn(2+) as cofactor.

It catalyses the reaction 7-aminomethyl-7-carbaguanine + guanosine(34) in tRNA = 7-aminomethyl-7-carbaguanosine(34) in tRNA + guanine. It functions in the pathway tRNA modification; tRNA-queuosine biosynthesis. In terms of biological role, catalyzes the base-exchange of a guanine (G) residue with the queuine precursor 7-aminomethyl-7-deazaguanine (PreQ1) at position 34 (anticodon wobble position) in tRNAs with GU(N) anticodons (tRNA-Asp, -Asn, -His and -Tyr). Catalysis occurs through a double-displacement mechanism. The nucleophile active site attacks the C1' of nucleotide 34 to detach the guanine base from the RNA, forming a covalent enzyme-RNA intermediate. The proton acceptor active site deprotonates the incoming PreQ1, allowing a nucleophilic attack on the C1' of the ribose to form the product. After dissociation, two additional enzymatic reactions on the tRNA convert PreQ1 to queuine (Q), resulting in the hypermodified nucleoside queuosine (7-(((4,5-cis-dihydroxy-2-cyclopenten-1-yl)amino)methyl)-7-deazaguanosine). The polypeptide is Queuine tRNA-ribosyltransferase (Dehalococcoides mccartyi (strain CBDB1)).